We begin with the raw amino-acid sequence, 812 residues long: ISWI one complex protein 2 (812 aa).

4 disordered regions span residues 1–21, 614–646, 679–704, and 762–812; these read MRTK…AGAA, MGNS…KRKP, AKQR…LEEL, and QTGS…PPTN. The segment covering 627–638 has biased composition (polar residues); it reads PQSTLEPSTKSS. The stretch at 673-714 forms a coiled coil; the sequence is ELKIIRAKQRKQQEDRERRKKMKEEKKRLEELAKKRELTESV. Basic and acidic residues predominate over residues 683-704; it reads KQQEDRERRKKMKEEKKRLEEL. Low complexity predominate over residues 769–796; the sequence is PQAPQAPQTSQASIQPQQQQQQQQQQQP.

Component of the ISW1B complex, which at least consists of ISW1, IOC2 and IOC4.

The protein resides in the nucleus. Functions as a component of the ISW1B complex, which acts in remodeling the chromatin by catalyzing an ATP-dependent alteration in the structure of nucleosomal DNA. The ISW1B complex acts within coding regions to control the amount of RNA polymerase II released into productive elongation and to coordinate elongation with termination and pre-mRNA processing. In Saccharomyces cerevisiae (strain ATCC 204508 / S288c) (Baker's yeast), this protein is ISWI one complex protein 2 (IOC2).